Reading from the N-terminus, the 301-residue chain is Ribosome-inactivating protein (301 aa).

A propeptide spans 1 to 16 (MAEITLEPSDLMAQTN) (or 12 (in 10% of the molecules)). Positions 162-186 (MATLEEEEVKMQMQMPEAADLAAAA) are excised as a propeptide. E207 is an active-site residue. A propeptide spanning residues 258–301 (VIPDMQKLGIKDKNEAARIVALVKNQTTAAAATAASADNDDDEA) is cleaved from the precursor.

The protein belongs to the ribosome-inactivating protein family. Type 1 RIP subfamily. Synthesized and stored in the kernel as a 34 kDa inactive precursor. During germination, this neutral precursor is converted into a basic, active form by limited proteolysis, which removes 25 AA of net charge -6 from the center of the polypeptide chain. Additional processing also occurs at the N- and C-termini of the polypeptide. A two-chain active RIP (comprised of 16.5 and 8.5 kDa fragments that remain tightly associated) is produced from this processing event.

The enzyme catalyses Endohydrolysis of the N-glycosidic bond at one specific adenosine on the 28S rRNA.. In terms of biological role, potent catalytic inactivator of eukaryotic protein synthesis. It may be a component of natural defense mechanisms involved in protecting the kernel against soil-borne fungal infections. The sequence is that of Ribosome-inactivating protein from Zea mays (Maize).